A 347-amino-acid polypeptide reads, in one-letter code: CCN family member 2 (347 aa).

A signal peptide spans 1–24; that stretch reads MLASVAGPVSLALVLLLCTRPATG. One can recognise an IGFBP N-terminal domain in the interval 25-96; that stretch reads QDCSAQCQCA…NRKIGVCTAK (72 aa). 6 cysteine pairs are disulfide-bonded: Cys27–Cys52, Cys31–Cys54, Cys33–Cys55, Cys41–Cys58, Cys66–Cys80, and Cys72–Cys93. One can recognise a VWFC domain in the interval 99–165; the sequence is APCVFGGSVY…GKCCEEWVCD (67 aa). Positions 196 to 241 constitute a TSP type-1 domain; it reads NCLVQTTEWSACSKTCGMGISTRVTNDNTFCRLEKQSRLCMVRPCE. Residues 245–347 form a heparin-binding region; that stretch reads EENIKKGKKC…YYRKMYGDMA (103 aa). Cystine bridges form between Cys254–Cys291, Cys271–Cys305, Cys282–Cys321, Cys285–Cys323, and Cys290–Cys327. The CTCK domain occupies 254-328; it reads CIRTPKIAKP…KTCACHYNCP (75 aa).

This sequence belongs to the CCN family. As to quaternary structure, monomer. Interacts with TSKU.

Its subcellular location is the secreted. The protein resides in the extracellular space. The protein localises to the extracellular matrix. Major connective tissue mitoattractant secreted by vascular endothelial cells. Promotes proliferation and differentiation of chondrocytes. Is involved in the stimulation of osteoblast differentiation and has a critical role in osteogenesis. Mediates heparin- and divalent cation-dependent cell adhesion in many cell types including fibroblasts, myofibroblasts, endothelial and epithelial cells. Enhances fibroblast growth factor-induced DNA synthesis. The chain is CCN family member 2 from Rattus norvegicus (Rat).